A 317-amino-acid polypeptide reads, in one-letter code: NF-kappa-B inhibitor alpha (317 aa).

The tract at residues 1–39 is disordered; that stretch reads MFQAAERPQEWAMEGPRDGLKKERLLDDRHDSGLDSMKD. A compositionally biased stretch (basic and acidic residues) spans 15–39; sequence GPRDGLKKERLLDDRHDSGLDSMKD. Residue lysine 21 forms a Glycyl lysine isopeptide (Lys-Gly) (interchain with G-Cter in SUMO); alternate linkage. Lysine 21 participates in a covalent cross-link: Glycyl lysine isopeptide (Lys-Gly) (interchain with G-Cter in ubiquitin); alternate. A Glycyl lysine isopeptide (Lys-Gly) (interchain with G-Cter in ubiquitin) cross-link involves residue lysine 22. The Destruction motif signature appears at 30–36; the sequence is HDSGLDS. Serine 32 carries the post-translational modification Phosphoserine; by IKKA and IKKE. At serine 36 the chain carries Phosphoserine; by IKKA, IKKB, IKKE and TBK1. Residue tyrosine 42 is modified to Phosphotyrosine; by Tyr-kinases. Residues 45–54 carry the Nuclear export signal motif; the sequence is MVKELQEIRL. ANK repeat units lie at residues 73 to 103, 110 to 139, 143 to 172, 182 to 211, and 216 to 245; these read DGDSFLHLAIIHEEKALTMEVIRQVKGDLAF, LQQTPLHLAVITNQPEIAEALLGAGCDPEL, RGNTPLHLACEQGCLASVGVLTQSCTTPHL, NGHTCLHLASIHGYLGIVELLVSLGADVNA, and NGRTALHLAVDLQNPDLVSLLLKCGADVNR. The Nuclear import signal motif lies at 110–120; it reads LQQTPLHLAVI. Residues asparagine 210 and asparagine 244 each carry the (3S)-3-hydroxyasparagine; by HIF1AN; partial modification. Phosphoserine; by CK2 is present on residues serine 283 and serine 288. Phosphothreonine; by CK2 is present on threonine 291. Serine 293 bears the Phosphoserine; by CK2 mark. Threonine 299 carries the phosphothreonine; by CK2 modification.

The protein belongs to the NF-kappa-B inhibitor family. Interacts with RELA; the interaction requires the nuclear import signal. Part of a 70-90 kDa complex at least consisting of CHUK, IKBKB, NFKBIA, RELA, ELP1 and MAP3K14. Interacts with NKIRAS1 and NKIRAS2. Interacts with isoform 1 and isoform 2 of RWDD3; the interaction enhances sumoylation. Interacts with PRMT2. Interacts with PRKACA in platelets; this interaction is disrupted by thrombin and collagen. Interacts with MEFV. Interacts with DDRGK1; positively regulates NFKBIA phosphorylation and degradation. Interacts with HNRNPA2B1; the interaction may be mediated by the RRM2 domain of HNRNPA2B1, and HNRNPA2B1 may interact simultaneously with FAM76B and either NFKBIA or NFKBIE to form a complex. In terms of assembly, (Microbial infection) Interacts with HBV protein X. Post-translationally, phosphorylated at Ser-32 and Ser-36 by IKKA/CHUK and IKKB/IKBKB; disables inhibition of NF-kappa-B DNA-binding activity. Phosphorylation at positions 32 and 36 is prerequisite to recognition by the SCF(FBXW11) and SCF(BTRC) complexes, leading to polyubiquitination and subsequent degradation. Phosphorylated at Ser-32 in response to FK506 treatment: phosphorylation is independent of IKKA/CHUK and IKKB/IKBKB and promotes NFKBIA degradation, followed by NF-kappa-B activation. Phosphorylated at Tyr-42: its effect is however unclear. According to a report, phosphorylation at Tyr-42 activates NF-kappa-B without triggering proteolytic degradation of NFKBIA. According to another publication, phosphorylation at Tyr-42 inhibits NF-kappa-B activity by preventing phosphorylation at Ser-32 and Ser-36 and subsequent ubiquitination and degradation. Polyubiquitinated at Lys-21 and/or Lys-22 following phosphorylation at Ser-32 and Ser-36. Monoubiquitinated at Lys-21 and/or Lys-22 by UBE2D3. Ubiquitin chain elongation is then performed by CDC34 in cooperation with the SCF(FBXW11) E3 ligase complex, building ubiquitin chains from the UBE2D3-primed NFKBIA-linked ubiquitin. The resulting polyubiquitination leads to protein degradation. Also ubiquitinated by the SCF(BTRC) complex following stimulus-dependent phosphorylation at Ser-32 and Ser-36. Deubiquitinated by USP38, leading to NF-kappa-B inhibition. In terms of processing, sumoylated; sumoylation requires the presence of the nuclear import signal. Sumoylation blocks ubiquitination and proteasome-mediated degradation of the protein thereby increasing the protein stability. Post-translationally, hydroxylated by HIF1AN. (Microbial infection) Deubiquitinated by porcine reproductive and respiratory syndrome virus Nsp2 protein, which thereby interferes with NFKBIA degradation and impairs subsequent NF-kappa-B activation.

It is found in the cytoplasm. The protein resides in the nucleus. Functionally, inhibits the activity of dimeric NF-kappa-B/REL complexes by trapping REL (RELA/p65 and NFKB1/p50) dimers in the cytoplasm by masking their nuclear localization signals. On cellular stimulation by immune and pro-inflammatory responses, becomes phosphorylated promoting ubiquitination and degradation, enabling the dimeric RELA to translocate to the nucleus and activate transcription. The protein is NF-kappa-B inhibitor alpha (NFKBIA) of Homo sapiens (Human).